The chain runs to 487 residues: Arginine ADP-riboxanase CopC (487 aa).

A compositionally biased stretch (polar residues) spans 1–12 (MRVENHSPSLSK). The segment at 1–27 (MRVENHSPSLSKLNPPEAGSGDPTAIG) is disordered. 8 residues coordinate NAD(+): H137, Q138, S139, L143, A150, A152, N154, and L157. H137 serves as a coordination point for nicotinamide. ADP-D-ribose contacts are provided by S139 and L143. Residues A152, N154, L157, G166, N167, T168, and F183 each coordinate ADP-D-ribose. N167 contributes to the NAD(+) binding site. F183 lines the NAD(+) pocket. 4 residues coordinate nicotinamide: F183, F184, H202, and F207. NAD(+) is bound at residue H202. Residues F207 and D230 each coordinate ADP-D-ribose. The NAD(+) site is built by D230 and E325. Residue E325 participates in nicotinamide binding. E325 is a catalytic residue. ANK repeat units lie at residues 368–398 (DAVTAMWHAIDKGKDAVAAHLLGNWRFEAGD) and 444–476 (SGETMLDNAVKYGNREMAAALIKHGADRNLLSE).

The protein belongs to the OspC family. As to quaternary structure, interacts with host calmodulin (CALM1, CALM2 and/or CALM3); specifically interacts with the apo form of calmodulin and calmodulin-binding is required to mediate arginine ADP-riboxanation of host caspases.

It localises to the secreted. The protein resides in the host cytoplasm. The catalysed reaction is L-arginyl-[protein] + NAD(+) = ADP-riboxanated L-argininyl-[protein] + nicotinamide + NH4(+) + H(+). Interaction with host calmodulin (CALM1, CALM2 and/or CALM3) is required to mediate arginine ADP-riboxanation of host caspases. In terms of biological role, ADP-riboxanase effector that inhibits host cell programmed cell death. Acts by mediating arginine ADP-riboxanation of host caspases (CASP3, CASP7, CASP8 and CASP9), blocking their processing and activation. ADP-riboxanation of host apoptotic caspases (CASP3, CASP7, CASP8 and CASP9) prevents their activation, thereby inhibiting host cell apoptosis. ADP-riboxanation of host CASP8 also inhibits host cell necroptosis. ADP-riboxanation of host CASP3 also abolishes pyroptosis by preventing its ability to cleave GSDME. May also able to inactivate CASP4/CASP11, blocking inhibiting LPS-induced pyroptosis; however this activity is unsure in vivo. ADP-riboxanation takes place in several steps: CopC first binds host caspases and NAD(+); NAD(+) is hydrolyzed to nicotinamide and ADP-D-ribose. CopC then transfers the ADP-D-ribose to the modified arginine of caspases and forms the ADP-D-ribose-deacylization on arginine, leading to deamination to remove one N-omega group on target arginine. This Chromobacterium violaceum (strain ATCC 12472 / DSM 30191 / JCM 1249 / CCUG 213 / NBRC 12614 / NCIMB 9131 / NCTC 9757 / MK) protein is Arginine ADP-riboxanase CopC.